Consider the following 408-residue polypeptide: Cytochrome P450 55A3 (408 aa).

A heme-binding site is contributed by cysteine 357.

It belongs to the cytochrome P450 family. Requires heme as cofactor.

The chain is Cytochrome P450 55A3 (CYP55A3) from Fusarium lichenicola (Cylindrocarpon lichenicola).